The following is a 253-amino-acid chain: Probable U2 small nuclear ribonucleoprotein A' (253 aa).

LRR repeat units lie at residues 20–41, 43–64, 65–86, and 89–110; these read NMRE…GVTR, QFDV…PTFS, RLNT…IATK, and NLKT…EPLA. Positions 123-161 constitute an LRRCT domain; sequence NPITHKDNYRMYMIYKLPTVRVIDFNRVRLTEREAAKKM. Disordered regions lie at residues 163 to 205 and 232 to 253; these read KGKS…EDRE and VPEK…AMES. Over residues 169 to 182 the composition is skewed to basic and acidic residues; the sequence is KARDAIQKSVHTED.

It belongs to the U2 small nuclear ribonucleoprotein A family. In terms of assembly, interacts with rnp-3.

The protein localises to the nucleus. This protein is associated with sn-RNP U2. It helps the A' protein to bind stem loop IV of U2 snRNA. Required maternally for early embryonic development and zygotically for germline and somatic development. Has a role in the switch from mitosis to meiosis. Might function in alternative splicing. The sequence is that of Probable U2 small nuclear ribonucleoprotein A' (mog-2) from Caenorhabditis elegans.